We begin with the raw amino-acid sequence, 77 residues long: Acyl carrier protein (77 aa).

One can recognise a Carrier domain in the interval 1 to 76 (MAIFDDVKKV…DVVNYIENLQ (76 aa)). An O-(pantetheine 4'-phosphoryl)serine modification is found at S36.

The protein belongs to the acyl carrier protein (ACP) family. Post-translationally, 4'-phosphopantetheine is transferred from CoA to a specific serine of apo-ACP by AcpS. This modification is essential for activity because fatty acids are bound in thioester linkage to the sulfhydryl of the prosthetic group.

It localises to the cytoplasm. Its pathway is lipid metabolism; fatty acid biosynthesis. Carrier of the growing fatty acid chain in fatty acid biosynthesis. The polypeptide is Acyl carrier protein (Campylobacter lari (strain RM2100 / D67 / ATCC BAA-1060)).